A 111-amino-acid polypeptide reads, in one-letter code: Probable 4-amino-4-deoxy-L-arabinose-phosphoundecaprenol flippase subunit ArnE (111 aa).

The next 3 helical transmembrane spans lie at 38 to 58 (LWLG…LLVL), 61 to 81 (LPVG…TLAA), and 91 to 111 (PRHW…GSAA). The EamA domain maps to 40-109 (LGLALICMGA…IISGIIILGS (70 aa)).

The protein belongs to the ArnE family. In terms of assembly, heterodimer of ArnE and ArnF.

It localises to the cell inner membrane. The protein operates within bacterial outer membrane biogenesis; lipopolysaccharide biosynthesis. Translocates 4-amino-4-deoxy-L-arabinose-phosphoundecaprenol (alpha-L-Ara4N-phosphoundecaprenol) from the cytoplasmic to the periplasmic side of the inner membrane. This is Probable 4-amino-4-deoxy-L-arabinose-phosphoundecaprenol flippase subunit ArnE from Salmonella enteritidis PT4 (strain P125109).